We begin with the raw amino-acid sequence, 394 residues long: ATP phosphoribosyltransferase regulatory subunit (394 aa).

This sequence belongs to the class-II aminoacyl-tRNA synthetase family. HisZ subfamily. In terms of assembly, heteromultimer composed of HisG and HisZ subunits.

It is found in the cytoplasm. Its pathway is amino-acid biosynthesis; L-histidine biosynthesis; L-histidine from 5-phospho-alpha-D-ribose 1-diphosphate: step 1/9. Functionally, required for the first step of histidine biosynthesis. May allow the feedback regulation of ATP phosphoribosyltransferase activity by histidine. In Geobacillus kaustophilus (strain HTA426), this protein is ATP phosphoribosyltransferase regulatory subunit.